The following is a 145-amino-acid chain: I-leader protein (145 aa).

Its subcellular location is the host cytoplasm. It localises to the host perinuclear region. The sequence is that of I-leader protein from Human adenovirus C serotype 2 (HAdV-2).